The sequence spans 461 residues: Fumarate hydratase class II (461 aa).

Substrate-binding positions include serine 97–threonine 99, histidine 127–aspartate 130, serine 137–asparagine 139, and threonine 185. Histidine 186 serves as the catalytic Proton donor/acceptor. Serine 316 is an active-site residue. Substrate contacts are provided by residues serine 317 and lysine 322 to asparagine 324.

Belongs to the class-II fumarase/aspartase family. Fumarase subfamily. As to quaternary structure, homotetramer.

Its subcellular location is the cytoplasm. It carries out the reaction (S)-malate = fumarate + H2O. It participates in carbohydrate metabolism; tricarboxylic acid cycle; (S)-malate from fumarate: step 1/1. Functionally, involved in the TCA cycle. Catalyzes the stereospecific interconversion of fumarate to L-malate. The polypeptide is Fumarate hydratase class II (Staphylococcus aureus (strain COL)).